We begin with the raw amino-acid sequence, 178 residues long: Ribonuclease M5 (178 aa).

In terms of domain architecture, Toprim spans 10–94; it reads DGVIVCEGKT…YVDMNARLKN (85 aa). Mg(2+)-binding residues include Glu-16, Asp-62, and Asp-64.

The protein belongs to the ribonuclease M5 family. Mg(2+) is required as a cofactor.

Its subcellular location is the cytoplasm. It catalyses the reaction Endonucleolytic cleavage of RNA, removing 21 and 42 nucleotides, respectively, from the 5'- and 3'-termini of a 5S-rRNA precursor.. Functionally, required for correct processing of both the 5' and 3' ends of 5S rRNA precursor. Cleaves both sides of a double-stranded region yielding mature 5S rRNA in one step. The chain is Ribonuclease M5 (rnmV) from Mycoplasma genitalium (strain ATCC 33530 / DSM 19775 / NCTC 10195 / G37) (Mycoplasmoides genitalium).